We begin with the raw amino-acid sequence, 429 residues long: Adenosylhomocysteinase (429 aa).

3 residues coordinate substrate: threonine 64, aspartate 136, and glutamate 161. Position 162 to 164 (162 to 164) interacts with NAD(+); it reads TTT. Residues lysine 191 and aspartate 195 each contribute to the substrate site. Residues asparagine 196, 225 to 230, glutamate 248, asparagine 283, 304 to 306, and asparagine 351 each bind NAD(+); these read GYGWCG and SGH.

It belongs to the adenosylhomocysteinase family. The cofactor is NAD(+).

Its subcellular location is the cytoplasm. It carries out the reaction S-adenosyl-L-homocysteine + H2O = L-homocysteine + adenosine. It participates in amino-acid biosynthesis; L-homocysteine biosynthesis; L-homocysteine from S-adenosyl-L-homocysteine: step 1/1. In terms of biological role, may play a key role in the regulation of the intracellular concentration of adenosylhomocysteine. The protein is Adenosylhomocysteinase of Gloeothece citriformis (strain PCC 7424) (Cyanothece sp. (strain PCC 7424)).